The chain runs to 560 residues: Involucrin (560 aa).

Positions 1–15 are enriched in polar residues; sequence MSQQHTLPVTLSPAL. Disordered regions lie at residues 1–131, 150–359, and 404–534; these read MSQQ…KLLD, EQLL…LVQQ, and GQLK…QSAL. Low complexity predominate over residues 76–91; the sequence is EQQQQEPQEQELQQQH. 2 stretches are compositionally biased toward basic and acidic residues: residues 92-115 and 159-172; these read WEQH…KAQR and QEGH…REGQ. Residues 189 to 211 are compositionally biased toward low complexity; sequence QKGQLELPEQQEGQLELPEQQEG. Composition is skewed to basic and acidic residues over residues 212-231, 252-264, and 274-320; these read QLKH…HQEG, QLKH…KQPE, and KHLE…EHQE. The segment covering 321 to 334 has biased composition (low complexity); that stretch reads GQLGLPEQQVQQLK. Composition is skewed to basic and acidic residues over residues 335-353, 404-420, 454-463, 476-486, and 494-510; these read QLEK…EGQL, GQLK…KHLE, QLKHLEKQEA, KHLEQQEKQLE, and QLKH…DLEQ.

Belongs to the involucrin family. In terms of assembly, directly or indirectly cross-linked to cornifelin (CNFN). In terms of processing, substrate of transglutaminase. Specific glutamines or lysines are cross-linked to keratins, desmoplakin and to inter involucrin molecules. Keratinocytes of epidermis and other stratified squamous epithelia.

It localises to the cytoplasm. Functionally, part of the insoluble cornified cell envelope (CE) of stratified squamous epithelia. The chain is Involucrin (IVL) from Pan paniscus (Pygmy chimpanzee).